The sequence spans 986 residues: Centrosomal protein of 120 kDa (986 aa).

Residues 1-112 (MVSKSDQLLI…QETKQAPKWY (112 aa)) form the C2 1 domain. The tract at residues 350–424 (ELKTQNEHEP…PNPKASSSVP (75 aa)) is disordered. Polar residues predominate over residues 377-394 (GPKSPTVSPVPSHNQSPP). The 134-residue stretch at 433–566 (TSNASEVASG…LSSEKTRFLG (134 aa)) folds into the C2 2 domain. Positions 669–925 (ENQLKQKELA…KQYQDSTEIA (257 aa)) form a coiled coil. Positions 914 to 937 (EQKQYQDSTEIASGKKDGPHGSVL) are disordered. Residues 915–924 (QKQYQDSTEI) are compositionally biased toward polar residues. The residue at position 935 (Ser-935) is a Phosphoserine.

Belongs to the CEP120 family. Interacts with TACC2, TACC3, CCDC52, TALPID3.

The protein localises to the cytoplasm. It is found in the cytoskeleton. It localises to the microtubule organizing center. Its subcellular location is the centrosome. Plays a role in the microtubule-dependent coupling of the nucleus and the centrosome. Involved in the processes that regulate centrosome-mediated interkinetic nuclear migration (INM) of neural progenitors and for proper positioning of neurons during brain development. Also implicated in the migration and selfrenewal of neural progenitors. Required for centriole duplication and maturation during mitosis and subsequent ciliogenesis. Required for the recruitment of CEP295 to the proximal end of new-born centrioles at the centriolar microtubule wall during early S phase in a PLK4-dependent manner. The sequence is that of Centrosomal protein of 120 kDa (CEP120) from Homo sapiens (Human).